Here is an 831-residue protein sequence, read N- to C-terminus: DNA polymerase I, thermostable (831 aa).

The 5'-3' exonuclease domain occupies 174 to 258 (RPEQWVDYRA…TDLPLEVDFG (85 aa)). The segment at 409-831 (ERLFQTLKER…LGEDWLSAKE (423 aa)) is polymerase.

The protein belongs to the DNA polymerase type-A family.

It carries out the reaction DNA(n) + a 2'-deoxyribonucleoside 5'-triphosphate = DNA(n+1) + diphosphate. Its function is as follows. In addition to polymerase activity, this DNA polymerase exhibits 5'-3' exonuclease activity. This Thermus thermophilus protein is DNA polymerase I, thermostable (polA).